Consider the following 357-residue polypeptide: P2Y purinoceptor 8 (357 aa).

The Extracellular segment spans residues 1 to 26 (MVKNGSHLDAETLAMLQNKAISITLP). N-linked (GlcNAc...) asparagine glycosylation is present at asparagine 4. Residues 27–47 (VVYTMVAIISIPGNFFSLWVL) traverse the membrane as a helical segment. Topologically, residues 48-56 (CWHIKPKTP) are cytoplasmic. A helical transmembrane segment spans residues 57–77 (SVIFMINLSITDLLLACCFPF). The Extracellular segment spans residues 78-97 (QIFYHIQRNHWIFGKTLCSL). A disulfide bond links cysteine 95 and cysteine 174. A helical membrane pass occupies residues 98 to 118 (VTVMFYSNMYSSILTMTCISI). Residues 119-137 (ERYMGVVYPMKLIKWRRKR) are Cytoplasmic-facing. A helical membrane pass occupies residues 138–158 (YALGACVIMWIFLLLAFYPLE). The Extracellular segment spans residues 159-185 (STDLTYEVKELGIITCFDVLKWEMLPN). Residues 186–206 (FAAWVAFLLTLFVVLFLIPFI) traverse the membrane as a helical segment. The Cytoplasmic portion of the chain corresponds to 207–236 (VTVGCYIGTIRKLIQTSSRYGNKQKTRSIY). Residues 237–257 (LAIIVLSVFITCFAPNNFILL) form a helical membrane-spanning segment. At 258–271 (AHMIVRLFYEGSLY) the chain is on the extracellular side. A helical membrane pass occupies residues 272–294 (PAYKLTLCLSCLNNCIDPFIYYF). The Cytoplasmic portion of the chain corresponds to 295–357 (ASKEFYQKFM…ICLQRQESVF (63 aa)).

Belongs to the G-protein coupled receptor 1 family.

It localises to the cell membrane. In terms of biological role, probable receptor for purines coupled to G-proteins. The sequence is that of P2Y purinoceptor 8 (P2RY8) from Gallus gallus (Chicken).